The sequence spans 114 residues: Pro-FMRFamide-related neuropeptide FF (114 aa).

The signal sequence occupies residues 1-21 (MDSKWAAVLLLLLLLRNWGHA). Positions 22-69 (EEAGSWGEDQVFAEEDKGPHPSQYAHTPDRIQTPGSLMRVLLQAMERP) are excised as a propeptide. The segment at 29-51 (EDQVFAEEDKGPHPSQYAHTPDR) is disordered. Phe-82 bears the Phenylalanine amide mark. The propeptide occupies 85 to 100 (NAWGPWSKEQLSPQAR). Residue Phe-111 is modified to Phenylalanine amide.

The protein belongs to the FARP (FMRFamide related peptide) family.

The protein localises to the secreted. In terms of biological role, morphine modulating peptides. Have wide-ranging physiologic effects, including the modulation of morphine-induced analgesia, elevation of arterial blood pressure, and increased somatostatin secretion from the pancreas. Neuropeptide FF and SF potentiate and sensitize ASIC2 and ASIC3 channels. The protein is Pro-FMRFamide-related neuropeptide FF (Npff) of Rattus norvegicus (Rat).